A 629-amino-acid chain; its full sequence is 5-aminolevulinate synthase, mitochondrial (629 aa).

Residues 1-69 constitute a mitochondrion transit peptide; it reads MDSVLRQSKA…VQSARTGGRA (69 aa). Substrate-binding residues include Arg-155, Ser-268, and Lys-287. Pyridoxal 5'-phosphate is bound by residues Ser-320, His-348, and Thr-388. Lys-391 is a catalytic residue. At Lys-391 the chain carries N6-(pyridoxal phosphate)lysine. Residues Thr-420 and Thr-421 each coordinate pyridoxal 5'-phosphate. Position 506 (Thr-506) interacts with substrate.

It belongs to the class-II pyridoxal-phosphate-dependent aminotransferase family. In terms of assembly, homodimer. The cofactor is pyridoxal 5'-phosphate.

The protein resides in the mitochondrion matrix. It carries out the reaction succinyl-CoA + glycine + H(+) = 5-aminolevulinate + CO2 + CoA. It functions in the pathway porphyrin-containing compound metabolism; protoporphyrin-IX biosynthesis; 5-aminolevulinate from glycine: step 1/1. In terms of biological role, catalyzes the synthesis of 5-aminolevulinate (ALA) from succinyl-CoA and glycine, the first and rate-limiting step in heme biosynthesis. The sequence is that of 5-aminolevulinate synthase, mitochondrial (alv-1) from Neurospora crassa (strain ATCC 24698 / 74-OR23-1A / CBS 708.71 / DSM 1257 / FGSC 987).